The following is a 250-amino-acid chain: 3-deoxy-manno-octulosonate cytidylyltransferase (250 aa).

Belongs to the KdsB family.

The protein resides in the cytoplasm. It catalyses the reaction 3-deoxy-alpha-D-manno-oct-2-ulosonate + CTP = CMP-3-deoxy-beta-D-manno-octulosonate + diphosphate. Its pathway is nucleotide-sugar biosynthesis; CMP-3-deoxy-D-manno-octulosonate biosynthesis; CMP-3-deoxy-D-manno-octulosonate from 3-deoxy-D-manno-octulosonate and CTP: step 1/1. It functions in the pathway bacterial outer membrane biogenesis; lipopolysaccharide biosynthesis. Its function is as follows. Activates KDO (a required 8-carbon sugar) for incorporation into bacterial lipopolysaccharide in Gram-negative bacteria. The protein is 3-deoxy-manno-octulosonate cytidylyltransferase of Francisella tularensis subsp. tularensis (strain FSC 198).